The following is a 221-amino-acid chain: Phosphoribosylformylglycinamidine synthase subunit PurQ (221 aa).

Positions 3 to 221 (AAVLVFPGSN…MFASLMQVMA (219 aa)) constitute a Glutamine amidotransferase type-1 domain. C87 serves as the catalytic Nucleophile. Catalysis depends on residues H195 and E197.

In terms of assembly, part of the FGAM synthase complex composed of 1 PurL, 1 PurQ and 2 PurS subunits.

The protein resides in the cytoplasm. The catalysed reaction is N(2)-formyl-N(1)-(5-phospho-beta-D-ribosyl)glycinamide + L-glutamine + ATP + H2O = 2-formamido-N(1)-(5-O-phospho-beta-D-ribosyl)acetamidine + L-glutamate + ADP + phosphate + H(+). It catalyses the reaction L-glutamine + H2O = L-glutamate + NH4(+). The protein operates within purine metabolism; IMP biosynthesis via de novo pathway; 5-amino-1-(5-phospho-D-ribosyl)imidazole from N(2)-formyl-N(1)-(5-phospho-D-ribosyl)glycinamide: step 1/2. Functionally, part of the phosphoribosylformylglycinamidine synthase complex involved in the purines biosynthetic pathway. Catalyzes the ATP-dependent conversion of formylglycinamide ribonucleotide (FGAR) and glutamine to yield formylglycinamidine ribonucleotide (FGAM) and glutamate. The FGAM synthase complex is composed of three subunits. PurQ produces an ammonia molecule by converting glutamine to glutamate. PurL transfers the ammonia molecule to FGAR to form FGAM in an ATP-dependent manner. PurS interacts with PurQ and PurL and is thought to assist in the transfer of the ammonia molecule from PurQ to PurL. The sequence is that of Phosphoribosylformylglycinamidine synthase subunit PurQ from Zymomonas mobilis subsp. mobilis (strain ATCC 31821 / ZM4 / CP4).